The sequence spans 504 residues: Glycerol kinase (504 aa).

Residue Thr-14 coordinates ADP. ATP is bound by residues Thr-14, Thr-15, and Ser-16. Residue Thr-14 participates in sn-glycerol 3-phosphate binding. An ADP-binding site is contributed by Arg-18. Positions 84, 85, 136, and 246 each coordinate sn-glycerol 3-phosphate. Residues Arg-84, Glu-85, Tyr-136, Asp-246, and Gln-247 each contribute to the glycerol site. ADP is bound by residues Thr-268 and Gly-311. 4 residues coordinate ATP: Thr-268, Gly-311, Gln-315, and Gly-412. Positions 412 and 416 each coordinate ADP.

It belongs to the FGGY kinase family.

It catalyses the reaction glycerol + ATP = sn-glycerol 3-phosphate + ADP + H(+). The protein operates within polyol metabolism; glycerol degradation via glycerol kinase pathway; sn-glycerol 3-phosphate from glycerol: step 1/1. Its activity is regulated as follows. Inhibited by fructose 1,6-bisphosphate (FBP). Key enzyme in the regulation of glycerol uptake and metabolism. Catalyzes the phosphorylation of glycerol to yield sn-glycerol 3-phosphate. The polypeptide is Glycerol kinase (Aliivibrio fischeri (strain ATCC 700601 / ES114) (Vibrio fischeri)).